Reading from the N-terminus, the 354-residue chain is Ferrochelatase (354 aa).

The Fe cation site is built by His214 and Glu295.

Belongs to the ferrochelatase family.

Its subcellular location is the cytoplasm. The enzyme catalyses heme b + 2 H(+) = protoporphyrin IX + Fe(2+). It functions in the pathway porphyrin-containing compound metabolism; protoheme biosynthesis; protoheme from protoporphyrin-IX: step 1/1. Its function is as follows. Catalyzes the ferrous insertion into protoporphyrin IX. The chain is Ferrochelatase from Burkholderia cenocepacia (strain HI2424).